A 451-amino-acid polypeptide reads, in one-letter code: MGEISMKSKVCPLIYHFLQENGYVKTAQTFLKETGDKDLAKGKVKKNLLDLLSQKEFLPYLTTEDVGKHKKTKESLEKSNDDSQKISKKGAPPEKAHSSSEASGSGSSSDESDSSSSESESSSEDNDSSSSSSDSESESSSEDSDSSSSSSDSESESSSEGSDSSSSSSSSESESSSEDNDSSSSSSDSESESSSEDSDSSSSSSDSESESSSEGSDSSSSSSSSESESSSEDNDSSSSSSDSESESSSEDSDSSSSSSDSESESSSKDSDSSSNSSDSEDDSSSDSSDSESESSSEDSDSTSSSSDSDSSSSSEDGNSNTDTTTSGEVSAQSSTNSTSSEESTSVKDEDSSKIHDKSLKRKHEDDESSTSTKSSRTTKTPFTRVGDPSQWDFASPALRDNSFNFEDDYGTLANRDLIVTRGKGFRQEKNKKKRGSYRGGRINTEVRSFKF.

One can recognise a LisH domain in the interval 6-38; sequence MKSKVCPLIYHFLQENGYVKTAQTFLKETGDKD. Residues 59–394 form a disordered region; that stretch reads PYLTTEDVGK…VGDPSQWDFA (336 aa). Residues 73–98 show a composition bias toward basic and acidic residues; sequence KESLEKSNDDSQKISKKGAPPEKAHS. The segment covering 99–120 has biased composition (low complexity); sequence SSEASGSGSSSDESDSSSSESE. Over residues 135 to 145 the composition is skewed to acidic residues; sequence SESESSSEDSD. A compositionally biased stretch (low complexity) spans 146–174; that stretch reads SSSSSSDSESESSSEGSDSSSSSSSSESE. Over residues 189-199 the composition is skewed to acidic residues; that stretch reads SESESSSEDSD. Residues 200-228 are compositionally biased toward low complexity; that stretch reads SSSSSSDSESESSSEGSDSSSSSSSSESE. Composition is skewed to acidic residues over residues 243–253 and 278–300; these read SESESSSEDSD and DSED…EDSD. Residues 301-319 are compositionally biased toward low complexity; that stretch reads STSSSSDSDSSSSSEDGNS. Over residues 320-332 the composition is skewed to polar residues; the sequence is NTDTTTSGEVSAQ. Residues 333–343 are compositionally biased toward low complexity; it reads SSTNSTSSEES. A compositionally biased stretch (basic and acidic residues) spans 344-365; sequence TSVKDEDSSKIHDKSLKRKHED. Low complexity predominate over residues 369 to 380; that stretch reads STSTKSSRTTKT.

It is found in the nucleus. The protein localises to the nucleolus. The chain is LisH domain-containing protein C1711.05 from Schizosaccharomyces pombe (strain 972 / ATCC 24843) (Fission yeast).